The chain runs to 1085 residues: Error-prone DNA polymerase (1085 aa).

This sequence belongs to the DNA polymerase type-C family. DnaE2 subfamily.

Its subcellular location is the cytoplasm. The catalysed reaction is DNA(n) + a 2'-deoxyribonucleoside 5'-triphosphate = DNA(n+1) + diphosphate. DNA polymerase involved in damage-induced mutagenesis and translesion synthesis (TLS). It is not the major replicative DNA polymerase. This chain is Error-prone DNA polymerase, found in Symbiobacterium thermophilum (strain DSM 24528 / JCM 14929 / IAM 14863 / T).